A 358-amino-acid polypeptide reads, in one-letter code: E3 ubiquitin-protein ligase RNF146 (358 aa).

The RING-type zinc-finger motif lies at 36 to 74; it reads CAICLQTCVHPVSLPCKHVFCYLCVKGASWLGKRCALCR. Glycyl lysine isopeptide (Lys-Gly) (interchain with G-Cter in ubiquitin) cross-links involve residues Lys-84 and Lys-94. Residues 91–167 enclose the WWE domain; sequence EELKAASRGN…EHGRRRKIKR (77 aa). 3 residues coordinate a glycoprotein: Tyr-107, Arg-110, and Trp-114. Lys-130 is covalently cross-linked (Glycyl lysine isopeptide (Lys-Gly) (interchain with G-Cter in ubiquitin)). Residues Tyr-144, Gln-153, Arg-163, and Lys-175 each coordinate a glycoprotein. A Glycyl lysine isopeptide (Lys-Gly) (interchain with G-Cter in ubiquitin) cross-link involves residue Lys-175. Positions 253 to 358 are disordered; sequence GDNTAERSHR…PDGQCTVTEV (106 aa). Over residues 283–297 the composition is skewed to acidic residues; that stretch reads SIEETESDASSDSED. Phosphoserine is present on residues Ser-289 and Ser-293. The segment covering 305–322 has biased composition (polar residues); the sequence is HSLTQQRLLVSNANQTVP.

Can form homooligomers. Interacts with PARsylated AXIN1, AXIN2, BLZF1, CASC3, H1-2, IPO7, LIG3, NCL, PARP1, XRCC1, XRCC5 and XRCC6. Interacts with DDB1, DHX15, IQGAP1, LRPPRC, PARP2, PRKDC, RUVBL2, TNKS1 and TNKS2. Binding often leads to interactor ubiquitination, in the presence of the appropriate E1 and E2 enzymes, and proteasomal degradation. Ubiquitinated; autoubiquitinated. Autoubiquitination is enhanced upon poly(ADP-ribose)-binding.

It localises to the cytoplasm. Its subcellular location is the cytosol. The protein resides in the nucleus. The catalysed reaction is S-ubiquitinyl-[E2 ubiquitin-conjugating enzyme]-L-cysteine + [acceptor protein]-L-lysine = [E2 ubiquitin-conjugating enzyme]-L-cysteine + N(6)-ubiquitinyl-[acceptor protein]-L-lysine.. It participates in protein modification; protein ubiquitination. In terms of biological role, E3 ubiquitin-protein ligase that specifically binds poly-ADP-ribosylated (PARsylated) proteins and mediates their ubiquitination and subsequent degradation. May regulate many important biological processes, such as cell survival and DNA damage response. Acts as an activator of the Wnt signaling pathway by mediating the ubiquitination of PARsylated AXIN1 and AXIN2, 2 key components of the beta-catenin destruction complex. Acts in cooperation with tankyrase proteins (TNKS and TNKS2), which mediate PARsylation of target proteins AXIN1, AXIN2, BLZF1, CASC3, TNKS and TNKS2. Recognizes and binds tankyrase-dependent PARsylated proteins via its WWE domain and mediates their ubiquitination, leading to their degradation. Different ubiquitin linkage types have been observed: TNKS2 undergoes ubiquitination at 'Lys-48' and 'Lys-63', while AXIN1 is only ubiquitinated at 'Lys-48'. May regulate TNKS and TNKS2 subcellular location, preventing aggregation at a centrosomal location. Neuroprotective protein. Protects the brain against N-methyl-D-aspartate (NMDA) receptor-mediated glutamate excitotoxicity and ischemia, by interfering with PAR-induced cell death, called parthanatos. Prevents nuclear translocation of AIFM1 in a PAR-binding dependent manner. Does not affect PARP1 activation. Protects against cell death induced by DNA damaging agents, such as N-methyl-N-nitro-N-nitrosoguanidine (MNNG) and rescues cells from G1 arrest. Promotes cell survival after gamma-irradiation. Facilitates DNA repair. The protein is E3 ubiquitin-protein ligase RNF146 (RNF146) of Pongo abelii (Sumatran orangutan).